Reading from the N-terminus, the 32-residue chain is Alcohol dehydrogenase-related 31 kDa protein (32 aa).

Residue 11 to 32 (YVADCGGIALETSXVLMTKNIA) participates in NAD(+) binding.

The protein belongs to the short-chain dehydrogenases/reductases (SDR) family.

The polypeptide is Alcohol dehydrogenase-related 31 kDa protein (Adhr) (Drosophila yakuba (Fruit fly)).